Here is a 2603-residue protein sequence, read N- to C-terminus: Protein SABRE (2603 aa).

The N-terminal stretch at 1–35 is a signal peptide; that stretch reads MAASPAKFFFGFLIVSIVLWMIFMLFAWMLSRVLG. Asn-196 carries N-linked (GlcNAc...) asparagine glycosylation. The disordered stretch occupies residues 259 to 287; the sequence is FPKSKQSSASLRSDEVRTSATAASSAKKP. N-linked (GlcNAc...) asparagine glycosylation is found at Asn-331, Asn-486, Asn-597, Asn-807, Asn-867, Asn-887, Asn-1154, Asn-1249, Asn-1280, and Asn-1408. A disordered region spans residues 786–814; the sequence is PESGCNKGISSVKDGGPSEKINQSNSVNK. Positions 1416–1436 are disordered; that stretch reads FHQSPSSTEHPTDVGTVYSSQ. N-linked (GlcNAc...) asparagine glycosylation is found at Asn-1492 and Asn-1659. Disordered stretches follow at residues 1656–1676 and 1717–1777; these read EFEN…DDDG and EPPK…DDIG. Basic and acidic residues predominate over residues 1731-1748; sequence KIHEENQKESCPETHQGE. A compositionally biased stretch (polar residues) spans 1749–1766; that stretch reads MSRSSASPGRNLPSSPSH. Residues 1995-2023 adopt a coiled-coil conformation; the sequence is VEEVELAKINLEEKERERKLLLDDIRKLS. Asn-2333 carries an N-linked (GlcNAc...) asparagine glycan. Disordered regions lie at residues 2339-2380, 2448-2479, and 2554-2603; these read EQQE…RPRK, GKKF…KPDQ, and IRRH…DFRE. Residues 2343–2380 show a composition bias toward basic and acidic residues; it reads DFSKQKVKEIKPVKSGRSSHEEKKAGKSHEEKKSRPRK. N-linked (GlcNAc...) asparagine glycosylation occurs at Asn-2467. Residues 2554–2565 show a composition bias toward basic residues; it reads IRRHTKKFRPRS. Residues 2566–2583 show a composition bias toward polar residues; that stretch reads QRGSTSQQRESLPSSPIE. The span at 2586 to 2603 shows a compositional bias: low complexity; it reads PFESGYSSGSSPYEDFRE.

It belongs to the SABRE family. As to expression, highest levels in leaves, also expressed in leaves, flowers, and siliques, and, to a lower extent, in roots and stems.

It localises to the secreted. The protein localises to the golgi apparatus. May be involved in membrane trafficking. Required for cell expansion, especially in root cortex, probably by counteracting the action of ethylene in promoting cells radial expansion. Involved in female organ development. Antagonistically interacts with ethylene signaling to regulate plant responses to Pi starvation. The sequence is that of Protein SABRE from Arabidopsis thaliana (Mouse-ear cress).